A 134-amino-acid polypeptide reads, in one-letter code: uncharacterized protein (134 aa).

Positions 1–26 (MRLYKAMALCLPLVVICTSEVSQSTA) are cleaved as a signal peptide. A disordered region spans residues 77-98 (GEKNEEVAGPVDGEGSEEEAFD).

This is an uncharacterized protein from Encephalitozoon cuniculi (strain GB-M1) (Microsporidian parasite).